Reading from the N-terminus, the 148-residue chain is Ponticulin-like protein D (148 aa).

A signal peptide spans 1-20 (MLLNKSLLLLVAFVFAIVSA). N-linked (GlcNAc...) asparagine glycosylation occurs at Asn67. Asp125 carries GPI-like-anchor amidated aspartate lipidation. The propeptide at 126–148 (SSAAATMIASFSAILIALLFALL) is removed in mature form.

The protein belongs to the ponticulin family. In terms of processing, the GPI-like-anchor contains a phosphoceramide group, rather than a phosphatidyl group.

It is found in the cell membrane. The protein is Ponticulin-like protein D (ponD) of Dictyostelium discoideum (Social amoeba).